The sequence spans 743 residues: Phosphoribosylformylglycinamidine synthase subunit PurL (743 aa).

Histidine 50 is a catalytic residue. Positions 53 and 92 each coordinate ATP. Mg(2+) is bound at residue glutamate 94. Residues 95–98 (SHNH) and arginine 117 each bind substrate. The Proton acceptor role is filled by histidine 96. Aspartate 118 serves as a coordination point for Mg(2+). Substrate is bound at residue glutamine 241. Aspartate 269 lines the Mg(2+) pocket. 313–315 (ESQ) provides a ligand contact to substrate. The ATP site is built by aspartate 494 and glycine 531. Asparagine 532 provides a ligand contact to Mg(2+). Serine 534 provides a ligand contact to substrate.

It belongs to the FGAMS family. In terms of assembly, monomer. Part of the FGAM synthase complex composed of 1 PurL, 1 PurQ and 2 PurS subunits.

Its subcellular location is the cytoplasm. It carries out the reaction N(2)-formyl-N(1)-(5-phospho-beta-D-ribosyl)glycinamide + L-glutamine + ATP + H2O = 2-formamido-N(1)-(5-O-phospho-beta-D-ribosyl)acetamidine + L-glutamate + ADP + phosphate + H(+). Its pathway is purine metabolism; IMP biosynthesis via de novo pathway; 5-amino-1-(5-phospho-D-ribosyl)imidazole from N(2)-formyl-N(1)-(5-phospho-D-ribosyl)glycinamide: step 1/2. Functionally, part of the phosphoribosylformylglycinamidine synthase complex involved in the purines biosynthetic pathway. Catalyzes the ATP-dependent conversion of formylglycinamide ribonucleotide (FGAR) and glutamine to yield formylglycinamidine ribonucleotide (FGAM) and glutamate. The FGAM synthase complex is composed of three subunits. PurQ produces an ammonia molecule by converting glutamine to glutamate. PurL transfers the ammonia molecule to FGAR to form FGAM in an ATP-dependent manner. PurS interacts with PurQ and PurL and is thought to assist in the transfer of the ammonia molecule from PurQ to PurL. The polypeptide is Phosphoribosylformylglycinamidine synthase subunit PurL (Sinorhizobium fredii (strain HH103)).